Here is a 257-residue protein sequence, read N- to C-terminus: Diphthine synthase (257 aa).

Residues Leu-9, Asp-83, Met-86, 111-112, and Ile-163 contribute to the S-adenosyl-L-methionine site; that span reads SI.

Belongs to the diphthine synthase family. Homodimer.

It carries out the reaction 2-[(3S)-amino-3-carboxypropyl]-L-histidyl-[translation elongation factor 2] + 3 S-adenosyl-L-methionine = diphthine-[translation elongation factor 2] + 3 S-adenosyl-L-homocysteine + 3 H(+). It participates in protein modification; peptidyl-diphthamide biosynthesis. Its function is as follows. S-adenosyl-L-methionine-dependent methyltransferase that catalyzes the trimethylation of the amino group of the modified target histidine residue in translation elongation factor 2 (EF-2), to form an intermediate called diphthine. The three successive methylation reactions represent the second step of diphthamide biosynthesis. The sequence is that of Diphthine synthase from Thermoplasma acidophilum (strain ATCC 25905 / DSM 1728 / JCM 9062 / NBRC 15155 / AMRC-C165).